We begin with the raw amino-acid sequence, 509 residues long: Maturase K (509 aa).

The protein belongs to the intron maturase 2 family. MatK subfamily.

The protein resides in the plastid. It is found in the chloroplast. Its function is as follows. Usually encoded in the trnK tRNA gene intron. Probably assists in splicing its own and other chloroplast group II introns. This Nicotiana glauca (Glaucous tobacco) protein is Maturase K.